The chain runs to 262 residues: MAQPVPRLSIPAALALGSAALGAAFATGLLLGKRWPPWGSRRQERLLPPEDNPLWQYLLSRSMREHPALRSLRLLTLEQPQGDSMMTCEQAQLLANLARLIKAKKALDLGTFTGYSALALALALPEAGRVVTCEVDAEPPKLGRPMWKQAEVEQKIDLRLQPALQTLDELLAAGEAGTFDIAVVDADKENCTAYYERCLQLLRPGGVLAVLRVLWRGEVLQPQPRNKTVECVRNLNERILRDARVYISLLPLDDGLSLAFKI.

A helical; Signal-anchor for type II membrane protein transmembrane segment spans residues 12-32 (AALALGSAALGAAFATGLLLG). S-adenosyl-L-methionine is bound by residues aspartate 108, 110–111 (GT), serine 116, glutamate 134, valine 135, alanine 163, aspartate 185, aspartate 187, and tyrosine 194.

Belongs to the class I-like SAM-binding methyltransferase superfamily. Cation-dependent O-methyltransferase family. In terms of assembly, homodimer.

The protein localises to the membrane. In terms of biological role, putative O-methyltransferase. The polypeptide is Catechol O-methyltransferase domain-containing protein 1 (Comtd1) (Mus musculus (Mouse)).